A 264-amino-acid polypeptide reads, in one-letter code: Type III pantothenate kinase (264 aa).

Asp6–Lys13 provides a ligand contact to ATP. Gly108 to Arg111 contributes to the substrate binding site. Catalysis depends on Asp110, which acts as the Proton acceptor. Residue Thr134 coordinates ATP.

Belongs to the type III pantothenate kinase family. Homodimer. Requires NH4(+) as cofactor. K(+) is required as a cofactor.

It localises to the cytoplasm. It carries out the reaction (R)-pantothenate + ATP = (R)-4'-phosphopantothenate + ADP + H(+). Its pathway is cofactor biosynthesis; coenzyme A biosynthesis; CoA from (R)-pantothenate: step 1/5. Catalyzes the phosphorylation of pantothenate (Pan), the first step in CoA biosynthesis. This is Type III pantothenate kinase from Ehrlichia canis (strain Jake).